An 89-amino-acid chain; its full sequence is MAHKKAGGSSRNGRDSAGRRLGVKKFGGQEVVGGNIIIRQRGTRVYPGANVGMGKDHTLFALAEGRVRFHAGKLGRKYVSVDMMAEAAE.

The segment at 1–21 is disordered; that stretch reads MAHKKAGGSSRNGRDSAGRRL.

The protein belongs to the bacterial ribosomal protein bL27 family.

The protein is Large ribosomal subunit protein bL27 of Novosphingobium aromaticivorans (strain ATCC 700278 / DSM 12444 / CCUG 56034 / CIP 105152 / NBRC 16084 / F199).